Consider the following 569-residue polypeptide: Adenine deaminase 1 (569 aa).

Belongs to the metallo-dependent hydrolases superfamily. Adenine deaminase family. Mn(2+) serves as cofactor.

It carries out the reaction adenine + H2O + H(+) = hypoxanthine + NH4(+). In Rhizobium johnstonii (strain DSM 114642 / LMG 32736 / 3841) (Rhizobium leguminosarum bv. viciae), this protein is Adenine deaminase 1.